The chain runs to 368 residues: 2-aminoethylphosphonate--pyruvate transaminase (368 aa).

N6-(pyridoxal phosphate)lysine is present on Lys192.

Belongs to the class-V pyridoxal-phosphate-dependent aminotransferase family. PhnW subfamily. Homodimer. Requires pyridoxal 5'-phosphate as cofactor.

The enzyme catalyses (2-aminoethyl)phosphonate + pyruvate = phosphonoacetaldehyde + L-alanine. In terms of biological role, involved in phosphonate degradation. The sequence is that of 2-aminoethylphosphonate--pyruvate transaminase from Pseudomonas putida (strain W619).